The chain runs to 410 residues: Elongation factor Tu, chloroplastic (410 aa).

A tr-type G domain is found at 10-215 (KPHVNIGTIG…AVDQYIPTPK (206 aa)). Positions 19 to 26 (GHVDHGKT) are G1. Residue 19 to 26 (GHVDHGKT) participates in GTP binding. Mg(2+) is bound at residue Thr-26. The tract at residues 61 to 65 (GITIN) is G2. The tract at residues 82–85 (DCPG) is G3. GTP contacts are provided by residues 82 to 86 (DCPGH) and 137 to 140 (NKQD). Residues 137 to 140 (NKQD) are G4. Residues 175-177 (SAL) are G5.

It belongs to the TRAFAC class translation factor GTPase superfamily. Classic translation factor GTPase family. EF-Tu/EF-1A subfamily.

Its subcellular location is the plastid. It is found in the chloroplast. The catalysed reaction is GTP + H2O = GDP + phosphate + H(+). In terms of biological role, GTP hydrolase that promotes the GTP-dependent binding of aminoacyl-tRNA to the A-site of ribosomes during protein biosynthesis. This chain is Elongation factor Tu, chloroplastic (tufA), found in Nephroselmis olivacea (Green alga).